The chain runs to 155 residues: Small ribosomal subunit protein uS7 (155 aa).

It belongs to the universal ribosomal protein uS7 family. As to quaternary structure, part of the 30S ribosomal subunit. Contacts proteins S9 and S11.

One of the primary rRNA binding proteins, it binds directly to 16S rRNA where it nucleates assembly of the head domain of the 30S subunit. Is located at the subunit interface close to the decoding center, probably blocks exit of the E-site tRNA. In Nautilia profundicola (strain ATCC BAA-1463 / DSM 18972 / AmH), this protein is Small ribosomal subunit protein uS7.